The chain runs to 215 residues: Urease accessory protein UreG (215 aa).

A disordered region spans residues 1-21 (MNAPASSPARRTKKLPPLRVG). 24-31 (GPVGSGKT) lines the GTP pocket.

Belongs to the SIMIBI class G3E GTPase family. UreG subfamily. Homodimer. UreD, UreF and UreG form a complex that acts as a GTP-hydrolysis-dependent molecular chaperone, activating the urease apoprotein by helping to assemble the nickel containing metallocenter of UreC. The UreE protein probably delivers the nickel.

Its subcellular location is the cytoplasm. Facilitates the functional incorporation of the urease nickel metallocenter. This process requires GTP hydrolysis, probably effectuated by UreG. This chain is Urease accessory protein UreG, found in Burkholderia vietnamiensis (strain G4 / LMG 22486) (Burkholderia cepacia (strain R1808)).